The chain runs to 170 residues: Envelope protein 168 (170 aa).

Residue methionine 1 is a topological domain, intravirion. A helical transmembrane segment spans residues 2-22; it reads FYPVVQILIGIILVIILILGF. Residues 23–170 lie on the Virion surface side of the membrane; that stretch reads YHLKRKPPKK…TVMGIARNVL (148 aa).

It belongs to the asfivirus envelope protein p22 family.

The protein resides in the virion membrane. It is found in the host cell membrane. This chain is Envelope protein 168, found in African swine fever virus (isolate Tick/South Africa/Pretoriuskop Pr4/1996) (ASFV).